Reading from the N-terminus, the 611-residue chain is ATP-dependent zinc metalloprotease FtsH (611 aa).

Position 1 (Met1) is a topological domain, cytoplasmic. The helical transmembrane segment at 2–22 (VKNLIFWLVITVVLMSIFQNF) threads the bilayer. The Extracellular portion of the chain corresponds to 23-98 (NTNDVNNHKV…IGAIPEEPSL (76 aa)). Residues 99–119 (FISILISWFPMLLLIGVWIFF) traverse the membrane as a helical segment. At 120–611 (MRQMQMGGGK…KGWIETDTNK (492 aa)) the chain is on the cytoplasmic side. 192–199 (GPPGTGKT) contributes to the ATP binding site. Residue His414 participates in Zn(2+) binding. Residue Glu415 is part of the active site. Zn(2+) is bound by residues His418 and Asp492.

It in the central section; belongs to the AAA ATPase family. The protein in the C-terminal section; belongs to the peptidase M41 family. In terms of assembly, homohexamer. Zn(2+) is required as a cofactor.

The protein resides in the cell membrane. Its function is as follows. Acts as a processive, ATP-dependent zinc metallopeptidase for both cytoplasmic and membrane proteins. Plays a role in the quality control of integral membrane proteins. The sequence is that of ATP-dependent zinc metalloprotease FtsH from Buchnera aphidicola subsp. Acyrthosiphon pisum (strain APS) (Acyrthosiphon pisum symbiotic bacterium).